Consider the following 364-residue polypeptide: DNA polymerase IV (364 aa).

One can recognise a UmuC domain in the interval 8 to 189 (IIHIDMDCYF…LPLTKIPGVG (182 aa)). Mg(2+) is bound by residues aspartate 12 and aspartate 107. Residue glutamate 108 is part of the active site.

This sequence belongs to the DNA polymerase type-Y family. As to quaternary structure, monomer. It depends on Mg(2+) as a cofactor.

It is found in the cytoplasm. It catalyses the reaction DNA(n) + a 2'-deoxyribonucleoside 5'-triphosphate = DNA(n+1) + diphosphate. In terms of biological role, poorly processive, error-prone DNA polymerase involved in untargeted mutagenesis. Copies undamaged DNA at stalled replication forks, which arise in vivo from mismatched or misaligned primer ends. These misaligned primers can be extended by PolIV. Exhibits no 3'-5' exonuclease (proofreading) activity. May be involved in translesional synthesis, in conjunction with the beta clamp from PolIII. The polypeptide is DNA polymerase IV (Shewanella woodyi (strain ATCC 51908 / MS32)).